Reading from the N-terminus, the 365-residue chain is Transcription factor KUA1 (365 aa).

Residues 1-21 form a disordered region; it reads MTRRCSHCNHNGHNSRTCPNR. The segment at 3–20 adopts a CCHC-type zinc-finger fold; sequence RRCSHCNHNGHNSRTCPN. Positions 8-18 are enriched in polar residues; that stretch reads CNHNGHNSRTC. Residues 24–28 carry the R/KLFGV (transcriptional repression) motif; the sequence is KLFGV. Positions 41-99 are disordered; sequence MGNLSHYTGSGSGGHGTGSNTPGSPGDVPDHVAGDGYASEDFVAGSSSSRERKKGTPWT. The region spanning 90–146 is the HTH myb-type domain; that stretch reads RERKKGTPWTEEEHRMFLLGLQKLGKGDWRGISRNYVTTRTPTQVASHAQKYFIRQS. The H-T-H motif DNA-binding region spans 118–142; it reads WRGISRNYVTTRTPTQVASHAQKYF. 2 disordered regions span residues 214–254 and 321–365; these read SMDS…QPQL and ESNK…IHAL. The span at 220–254 shows a compositional bias: low complexity; sequence STTGEPTATAAAASSSSRLEETTQLQSQLQPQPQL. The segment covering 343 to 355 has biased composition (polar residues); that stretch reads RQSAFHPNPSSDS.

As to expression, expressed ubiquitously, except in hypocotyls, root tips and lateral root primordia.

Its subcellular location is the nucleus. Functionally, transcriptional repressor. Direct regulator of the transcription of peroxidase (Prxs) and reactive oxygen species (ROS)-related genes via the recognition of 5'-ATCACA-3' motif. Binds to 5'-TATCCA-3' motif (TA box) and represses the activity of corresponding promoters (e.g. sugar response genes). Regulates hypocotyl elongation in response to darkness by enhancing auxin accumulation in a phytochrome-interacting factor (PIF) proteins-dependent manner. Promotes lateral roots formation. Promotes cell expansion during leaves development via the modulation of cell wall-located Prxs. Plays a critical role in developmentally regulated and dark-induced onset of leaf senescence by repressing the transcription of several genes involved in chloroplast function and responses to light and auxin. Promotes responses to auxin, abscisic acid (ABA), and ethylene. The protein is Transcription factor KUA1 of Arabidopsis thaliana (Mouse-ear cress).